Consider the following 489-residue polypeptide: Sphingolipid C9-methyltransferase (489 aa).

2 helical membrane-spanning segments follow: residues 29-49 (GAKNFSNWLLLGLLTGVPLFV) and 59-79 (TFIFFFILFAIPILMAYWTVL). S-adenosyl-L-methionine-binding positions include 202 to 203 (YT), 239 to 247 (LLDLGCGWG), 265 to 270 (TLGKNQ), and 295 to 296 (YR).

This sequence belongs to the CFA/CMAS family.

Its subcellular location is the membrane. It carries out the reaction a (4E,8E)-4-sphinga-4,8-dienine ceramide + S-adenosyl-L-methionine = a 9-methyl-(4E,8E)-sphinga-4,8-dienine ceramide + S-adenosyl-L-homocysteine + H(+). The protein operates within lipid metabolism; sphingolipid metabolism. Functionally, catalyzes methylation of the sphingoid base component of glucosylceramides (GluCers) at the C9-position. Sphingolipid C9-methylation requires 4,8-desaturated ceramides as substrates. Glucosylceramides play important roles in growth, differentiation and pathogenicity. The methyl group at the C9-position distinguishes fungal glucosylceramides from those of plants and animals, and may thus play a role in host-pathogen interactions enabling the host to recognize the fungal attack and initiate specific defense responses. The chain is Sphingolipid C9-methyltransferase from Komagataella phaffii (strain GS115 / ATCC 20864) (Yeast).